The sequence spans 147 residues: Small ribosomal subunit protein uS12 (147 aa).

The protein belongs to the universal ribosomal protein uS12 family. In terms of assembly, part of the 30S ribosomal subunit.

With S4 and S5 plays an important role in translational accuracy. Located at the interface of the 30S and 50S subunits. This Pyrococcus abyssi (strain GE5 / Orsay) protein is Small ribosomal subunit protein uS12.